Consider the following 87-residue polypeptide: Venom serine protease inhibitor (87 aa).

The signal sequence occupies residues 1 to 23 (MPRLVLVSFLFLAIFSVFIGGFA). Cystine bridges form between Cys27/Cys61, Cys36/Cys57, Cys40/Cys53, Cys44/Cys81, and Cys63/Cys75. The TIL domain maps to 27–81 (CPRNEIFTRCHAACQPSCARLARKPFCIKICKPGCICTSGYLRNKNNVCVPRSRC).

The protein belongs to the serine protease inhibitor-like (TIL domain-containing) family. Specifically expressed by the venom gland.

Its subcellular location is the secreted. Antifibrinolytic and antimicrobial serine protease inhibitor. Inhibits trypsin, plasmin and microbial serine proteases but not chymotrypsin, thrombin and elastase. Inhibits the plasmin-mediated degradation of fibrin to fibrin degradation products. Also binds to bacterial and fungal surfaces and exhibits antimicrobial activity against fungi as well as Gram-positive and Gram-negative bacteria. This Apis cerana (Indian honeybee) protein is Venom serine protease inhibitor.